The chain runs to 270 residues: Glutamate racemase (270 aa).

Substrate contacts are provided by residues 7–8 (DS) and 39–40 (YG). Cys-70 acts as the Proton donor/acceptor in catalysis. Residue 71-72 (NT) participates in substrate binding. Cys-194 (proton donor/acceptor) is an active-site residue. Residue 195–196 (TH) participates in substrate binding.

The protein belongs to the aspartate/glutamate racemases family.

It carries out the reaction L-glutamate = D-glutamate. Its pathway is cell wall biogenesis; peptidoglycan biosynthesis. Provides the (R)-glutamate required for cell wall biosynthesis. The polypeptide is Glutamate racemase (Paracoccus denitrificans (strain Pd 1222)).